The sequence spans 180 residues: MENFFNQFFENIGEDKNREGLKETPKRVQELWKFLYKGYKEDPRVALKSAYFQGVCDEMIVAQNIEFYSTCEHHLLPFLGNISLGYIPKEKIVGISAIAKLIEIYSKRLQIQERLTTQITETFDEIIEPRGVIVVCEAKHLCMSMQGVQKQNAIIKTSVLRGLFKKDPKTRAEFMQLLKS.

Residues Cys71, His74, and Cys142 each contribute to the Zn(2+) site.

Belongs to the GTP cyclohydrolase I family. As to quaternary structure, toroid-shaped homodecamer, composed of two pentamers of five dimers.

It carries out the reaction GTP + H2O = 7,8-dihydroneopterin 3'-triphosphate + formate + H(+). The protein operates within cofactor biosynthesis; 7,8-dihydroneopterin triphosphate biosynthesis; 7,8-dihydroneopterin triphosphate from GTP: step 1/1. This Helicobacter pylori (strain HPAG1) protein is GTP cyclohydrolase 1.